The chain runs to 309 residues: Oxygen-dependent coproporphyrinogen-III oxidase (309 aa).

Ser94 lines the substrate pocket. A divalent metal cation-binding residues include His98 and His108. The Proton donor role is filled by His108. Position 110–112 (110–112 (NVR)) interacts with substrate. The a divalent metal cation site is built by His147 and His177. The segment at 242–277 (YVEFNLVWDRGTLFGLQTGGRTESILMSLPPLVRWE) is important for dimerization. 260 to 262 (GGR) contributes to the substrate binding site.

This sequence belongs to the aerobic coproporphyrinogen-III oxidase family. As to quaternary structure, homodimer. A divalent metal cation is required as a cofactor.

The protein resides in the cytoplasm. It catalyses the reaction coproporphyrinogen III + O2 + 2 H(+) = protoporphyrinogen IX + 2 CO2 + 2 H2O. It functions in the pathway porphyrin-containing compound metabolism; protoporphyrin-IX biosynthesis; protoporphyrinogen-IX from coproporphyrinogen-III (O2 route): step 1/1. Functionally, involved in the heme biosynthesis. Catalyzes the aerobic oxidative decarboxylation of propionate groups of rings A and B of coproporphyrinogen-III to yield the vinyl groups in protoporphyrinogen-IX. The sequence is that of Oxygen-dependent coproporphyrinogen-III oxidase from Yersinia pseudotuberculosis serotype O:1b (strain IP 31758).